A 394-amino-acid chain; its full sequence is Mitogen-activated protein kinase 2 (394 aa).

A compositionally biased stretch (gly residues) spans 1–31 (MRMEGGGGGGHGHHGGGGGGHGHHGGIGGGE). The interval 1–33 (MRMEGGGGGGHGHHGGGGGGHGHHGGIGGGEAQ) is disordered. A Protein kinase domain is found at 61 to 347 (VPPIRPVGRG…VDEALCHPYL (287 aa)). ATP-binding positions include 67–75 (VGRGACGII) and lysine 90. Residue aspartate 187 is the Proton acceptor of the active site. Tyrosine 221 carries the phosphotyrosine modification.

Belongs to the protein kinase superfamily. CMGC Ser/Thr protein kinase family. MAP kinase subfamily. Post-translationally, the phosphorylation on Tyr-221 activates the enzyme. A conserved Thr, which must also be phosphorylated to activate the enzyme in closely related sequences, is replaced by Met-219 in this sequence.

It carries out the reaction L-seryl-[protein] + ATP = O-phospho-L-seryl-[protein] + ADP + H(+). It catalyses the reaction L-threonyl-[protein] + ATP = O-phospho-L-threonyl-[protein] + ADP + H(+). The chain is Mitogen-activated protein kinase 2 (MPK2) from Oryza sativa subsp. japonica (Rice).